Here is a 203-residue protein sequence, read N- to C-terminus: MARFRGSITKVSRRLGVALSPKAEKYLERRPFAPGQHGQSRKGKVSEYALQLREKQKMKYLYGILEKQFRNYYKKAVAQRGVTGDNLVKLLERRLDNVVFRSGFSASRAGARQLVSHGHLVVNGKKVNIPSFQVSPGDLIEFRQRSRNMGAVTDSLSKAPESRFPSWIQVDKANQKAVFLSVPEREDIQEPFNEQLVVELYSK.

Residues 93–173 (RRLDNVVFRS…FPSWIQVDKA (81 aa)) form the S4 RNA-binding domain.

Belongs to the universal ribosomal protein uS4 family. Part of the 30S ribosomal subunit. Contacts protein S5. The interaction surface between S4 and S5 is involved in control of translational fidelity.

In terms of biological role, one of the primary rRNA binding proteins, it binds directly to 16S rRNA where it nucleates assembly of the body of the 30S subunit. Functionally, with S5 and S12 plays an important role in translational accuracy. The polypeptide is Small ribosomal subunit protein uS4 (Chlorobium limicola (strain DSM 245 / NBRC 103803 / 6330)).